We begin with the raw amino-acid sequence, 497 residues long: Cysteine--tRNA ligase (497 aa).

Position 46 (cysteine 46) interacts with Zn(2+). The short motif at 48 to 58 is the 'HIGH' region element; that stretch reads PTVYSDAHLGH. Positions 237, 262, and 266 each coordinate Zn(2+). A 'KMSKS' region motif is present at residues 293–297; it reads KMSKS. Position 296 (lysine 296) interacts with ATP.

This sequence belongs to the class-I aminoacyl-tRNA synthetase family. Monomer. Zn(2+) serves as cofactor.

The protein localises to the cytoplasm. It carries out the reaction tRNA(Cys) + L-cysteine + ATP = L-cysteinyl-tRNA(Cys) + AMP + diphosphate. In Deinococcus geothermalis (strain DSM 11300 / CIP 105573 / AG-3a), this protein is Cysteine--tRNA ligase.